Here is an 831-residue protein sequence, read N- to C-terminus: MLDCPRLALLCALPWLLRAAVPGHRAEPLKRSAELPRNPRDPARGADFDRVYSGVVSLSTENIYSFNHTSHPGQVTAVRVHVNSSSDNLDYPVLVVVRQQKQVLSWQVPLPFQGLYQRSYNYQEVSRTLCPSKATNETGPLEQLIFVDVASMAPHGAHYKLLVTKIKHFQLRTNVAFYFTASPSQPQYFLYKFPEDVDSVIIKVVSEKAYPCSVVSVQNIMCPVYDLDHDVEFNGVYQSMTKQAAITLQKDFPDEQFFVVFVIKPEDYACGGSFSIQENENQTWNLQRSKNLKVTIVPSVKGSVYVKSSLFSVFVFLSFYLGCLLVVFVHHMRFQRKPVDGSFGSGDGSGNMAVSHPITASTPEGSNYGAIDESSSSPGRQMSSSDGGQPCHSDTDSSVEESDFDTMPDIESDKNVIRTKMFLYLSDLSRKDRRIVSKKYKIYFWNIITIAVFYALPVMQLVITYQTVVNVTGNQDICYYNFLCAHPLGVLSAFNNILSNLGHVLLGFLFLLIVLRRDLLHRRALEAKDIFAMEYGIPKHFGLFYAMGIALMMEGVLSACYHVCPNYSNFQFDTSFMYMIAGLCMLKLYQTRHPDINASAYSAYASFAVVITLTVLGVVFGKNDVWFWIIFSAIHVLASLALSTQIYYMGRFKIDVSDTDLGIFRRAAMVFYTDCIQQCSRPLYMDRMVLLIVGNLVNWSFALFGLIYRPRDFASYMLGIFICNLLLYLAFYIIMKLRSSEKVLPLPVFCIVATAVVWAAALYFFFQNLSSWEGTPAESREKNRECVLLGFFDDHDIWHFLSATALFFSFLVLLTLDDDLDVVRRDQIPVF.

An N-terminal signal peptide occupies residues methionine 1–alanine 19. The Extracellular segment spans residues alanine 20–serine 308. Asparagine 67, asparagine 83, asparagine 136, and asparagine 281 each carry an N-linked (GlcNAc...) asparagine glycan. Residues serine 309–valine 329 traverse the membrane as a helical segment. Over histidine 330–lysine 441 the chain is Cytoplasmic. The tract at residues valine 354–proline 408 is disordered. Residues serine 374–serine 385 show a composition bias toward low complexity. Residues serine 397–proline 408 are compositionally biased toward acidic residues. A helical membrane pass occupies residues isoleucine 442 to valine 462. The Extracellular portion of the chain corresponds to isoleucine 463–alanine 493. An N-linked (GlcNAc...) asparagine glycan is attached at asparagine 470. A helical membrane pass occupies residues phenylalanine 494–valine 514. Residues leucine 515 to histidine 540 lie on the Cytoplasmic side of the membrane. The helical transmembrane segment at phenylalanine 541 to tyrosine 561 threads the bilayer. The Extracellular portion of the chain corresponds to histidine 562–glutamine 571. A glycan (N-linked (GlcNAc...) asparagine) is linked at asparagine 566. The helical transmembrane segment at phenylalanine 572–tyrosine 589 threads the bilayer. Over glutamine 590–serine 599 the chain is Cytoplasmic. A helical membrane pass occupies residues alanine 600–phenylalanine 620. Topologically, residues glycine 621 to valine 625 are extracellular. A helical membrane pass occupies residues tryptophan 626–isoleucine 646. At tyrosine 647–arginine 687 the chain is on the cytoplasmic side. A helical transmembrane segment spans residues methionine 688 to tyrosine 708. At arginine 709–alanine 714 the chain is on the extracellular side. Residues serine 715–methionine 735 form a helical membrane-spanning segment. At lysine 736 to proline 745 the chain is on the cytoplasmic side. Residues leucine 746 to phenylalanine 766 form a helical membrane-spanning segment. Residues glutamine 767–histidine 795 lie on the Extracellular side of the membrane. Asparagine 768 is a glycosylation site (N-linked (GlcNAc...) asparagine). Residues aspartate 796–leucine 816 traverse the membrane as a helical segment. The Cytoplasmic segment spans residues aspartate 817–phenylalanine 831.

This sequence belongs to the SID1 family.

It localises to the membrane. Its function is as follows. In vitro binds long double-stranded RNA (dsRNA) (500 and 700 base pairs), but not dsRNA shorter than 300 bp. Not involved in RNA autophagy, a process in which RNA is directly imported into lysosomes in an ATP-dependent manner, and degraded. The sequence is that of SID1 transmembrane family member 1 (Sidt1) from Rattus norvegicus (Rat).